Consider the following 453-residue polypeptide: Gastrin/cholecystokinin type B receptor (453 aa).

At methionine 1–arginine 57 the chain is on the extracellular side. Asparagine 7, asparagine 30, and asparagine 36 each carry an N-linked (GlcNAc...) asparagine glycan. The chain crosses the membrane as a helical span at residues valine 58–leucine 79. The Cytoplasmic portion of the chain corresponds to glycine 80–threonine 87. Residues valine 88–proline 109 traverse the membrane as a helical segment. The Extracellular segment spans residues phenylalanine 110–serine 131. Residues cysteine 127 and cysteine 206 are joined by a disulfide bond. Residues tyrosine 132–leucine 150 traverse the membrane as a helical segment. The Cytoplasmic segment spans residues glutamate 151–histidine 170. Residues alanine 171–tyrosine 189 form a helical membrane-spanning segment. The Extracellular portion of the chain corresponds to proline 190–serine 220. The helical transmembrane segment at valine 221 to serine 243 threads the bilayer. Residues arginine 244–arginine 339 are Cytoplasmic-facing. The disordered stretch occupies residues serine 258–glutamate 286. Residues methionine 340–tryptophan 361 traverse the membrane as a helical segment. At arginine 362–serine 379 the chain is on the extracellular side. The helical transmembrane segment at phenylalanine 380–histidine 400 threads the bilayer. At arginine 401–glycine 453 the chain is on the cytoplasmic side. Cysteine 414 carries S-palmitoyl cysteine lipidation. Residues arginine 422 to glycine 453 form a disordered region. A compositionally biased stretch (polar residues) spans serine 435–glycine 453.

It belongs to the G-protein coupled receptor 1 family. As to expression, parietal cells, pancreas, brain and various neoplastic tissues.

It localises to the cell membrane. Its function is as follows. Receptor for gastrin and cholecystokinin. The CCK-B receptors occur throughout the central nervous system where they modulate anxiety, analgesia, arousal, and neuroleptic activity. This receptor mediates its action by association with G proteins that activate a phosphatidylinositol-calcium second messenger system. The protein is Gastrin/cholecystokinin type B receptor (CCKBR) of Canis lupus familiaris (Dog).